Consider the following 60-residue polypeptide: Large ribosomal subunit protein uL30 (60 aa).

The protein belongs to the universal ribosomal protein uL30 family. In terms of assembly, part of the 50S ribosomal subunit.

The protein is Large ribosomal subunit protein uL30 of Shewanella loihica (strain ATCC BAA-1088 / PV-4).